Consider the following 489-residue polypeptide: Occludin (489 aa).

At 1 to 51 (MMYEKRSYTGYGHPSSHYDYPPPSGPPGSFYLADVPPQHFYQWRSPPGIVR) the chain is on the cytoplasmic side. The 204-residue stretch at 45 to 248 (SPPGIVRILQ…ICYFAQKTRH (204 aa)) folds into the MARVEL domain. A helical transmembrane segment spans residues 52-74 (ILQGSVVILCLVIFACVASTLAW). The Extracellular segment spans residues 75–112 (EYYGSGGLLGYGGGLGSYYNGYYGGYNGYYYGGLTNPR). Residues 113-137 (AANGFMIAMAVLCFLVTLGLVIAGL) form a helical membrane-spanning segment. Over 138–147 (SKASGARSRR) the chain is Cytoplasmic. The chain crosses the membrane as a helical span at residues 148 to 172 (FYLLVAVLSGLLAFVMLIASIVYVV). Over 173 to 222 (GVNPRAGLGASSGSLYYNQMLMLCNQMMSPVAGGIMNQYLYHYCMVDPQE) the chain is Extracellular. A disulfide bridge links Cys-196 with Cys-216. Residues 223–244 (AVAIVCGFLTVILLCVICYFAQ) traverse the membrane as a helical segment. The Cytoplasmic segment spans residues 245–489 (KTRHKIWKYG…MVGGYDQSRS (245 aa)). Residue Ser-280 is modified to Phosphoserine. Thr-285 is subject to Phosphothreonine. Ser-300 bears the Phosphoserine mark. A disordered region spans residues 308–382 (PAQENGYGHS…ESSGEQNRDD (75 aa)). Over residues 322 to 332 (PSVPPPEGPSP) the composition is skewed to pro residues. The segment covering 345–354 (PARRGHRQRP) has biased composition (basic residues). 2 positions are modified to phosphotyrosine: Tyr-364 and Tyr-368. Polar residues predominate over residues 365–377 (ETDYTTAAESSGE). A phosphothreonine; by PKC/PRKCH mark is found at Thr-369 and Thr-370. At Ser-374 the chain carries Phosphoserine. The OCEL domain maps to 381–489 (DDWASLYPPI…MVGGYDQSRS (109 aa)). Positions 407–434 (LQRYKALCAEMDDIGTQLRQLSHELDCL) form a coiled coil. Ser-457 carries the phosphoserine modification.

Belongs to the ELL/occludin family. Interacts with TJP1/ZO1. Interacts with VAPA. Interacts with CLDN1, CLDN6, CLDN9, CLDN11, CLDN12 and CLDN17. Interacts with PLSCR1. Interacts with LSR, ILDR1 and ILDR2. Interacts with TJP2/ZO2. Post-translationally, dephosphorylated by PTPRJ. Localized at tight junctions of both epithelial and endothelial cells.

The protein resides in the cell membrane. The protein localises to the cell junction. It localises to the tight junction. Its function is as follows. May play a role in the formation and regulation of the tight junction (TJ) paracellular permeability barrier. The sequence is that of Occludin (OCLN) from Potorous tridactylus (Potoroo).